We begin with the raw amino-acid sequence, 318 residues long: MKSLNIIFAGTPDFAARHLQALLNSQHNVIGVYTQPDRPAGRGKKLTASPVKELAIANNIPVFQPGSLRKEPAQQELAALNADIMVVVAYGLILPKVVLDTPRLGCINVHGSILPRWRGAAPIQRALWAGDKETGVTIMQMDVGLDTGDMLLKTYLPIEDNDTSASLYEKLAEQGPIALLQALEGLTNGTLAAEKQDEALANYAEKLSKEEARLDWNKSAKQLWQEVRAFNPWPVSYFEHQGNTIKVWQAHVSETISTAAPGTIISASKKGIEVATADGVLTLLSMQLPGKNPLNVADILNARGEWFSPNTRLANEAE.

112 to 115 provides a ligand contact to (6S)-5,6,7,8-tetrahydrofolate; it reads SILP.

Belongs to the Fmt family.

The catalysed reaction is L-methionyl-tRNA(fMet) + (6R)-10-formyltetrahydrofolate = N-formyl-L-methionyl-tRNA(fMet) + (6S)-5,6,7,8-tetrahydrofolate + H(+). In terms of biological role, attaches a formyl group to the free amino group of methionyl-tRNA(fMet). The formyl group appears to play a dual role in the initiator identity of N-formylmethionyl-tRNA by promoting its recognition by IF2 and preventing the misappropriation of this tRNA by the elongation apparatus. In Shewanella putrefaciens (strain CN-32 / ATCC BAA-453), this protein is Methionyl-tRNA formyltransferase.